Here is a 199-residue protein sequence, read N- to C-terminus: Ribosome maturation factor RimM (199 aa).

The region spanning 100–195 (ADEWYPKDLI…YLTLDPPGGL (96 aa)) is the PRC barrel domain.

Belongs to the RimM family. Binds ribosomal protein uS19.

The protein resides in the cytoplasm. Functionally, an accessory protein needed during the final step in the assembly of 30S ribosomal subunit, possibly for assembly of the head region. Essential for efficient processing of 16S rRNA. May be needed both before and after RbfA during the maturation of 16S rRNA. It has affinity for free ribosomal 30S subunits but not for 70S ribosomes. In Bifidobacterium longum (strain DJO10A), this protein is Ribosome maturation factor RimM.